We begin with the raw amino-acid sequence, 520 residues long: Poly(A)-specific ribonuclease PNLDC1 (520 aa).

Mg(2+) contacts are provided by Asp-17, Glu-19, Asp-260, and Asp-354. A helical membrane pass occupies residues 495-515 (VNCLLQVCGIVTAWALLAFIL).

Belongs to the CAF1 family. Requires Mg(2+) as cofactor.

It localises to the endoplasmic reticulum membrane. The enzyme catalyses Exonucleolytic cleavage of poly(A) to 5'-AMP.. Its function is as follows. 3'-exoribonuclease that has a preference for poly(A) tails of mRNAs, thereby efficiently degrading poly(A) tails. Exonucleolytic degradation of the poly(A) tail is often the first step in the decay of eukaryotic mRNAs and is also used to silence certain maternal mRNAs translationally during oocyte maturation and early embryonic development. May act as a regulator of multipotency in embryonic stem cells. Is a critical factor for proper spermatogenesis, involved in pre-piRNAs processing to generate mature piRNAs. The sequence is that of Poly(A)-specific ribonuclease PNLDC1 from Homo sapiens (Human).